The chain runs to 94 residues: MTINYQFGDVDAHGAMIRAQAGLLEAEHQAIIRDVLTASDFWGGAGSAACQGFITQLGRNFQVIYEQANAHGQKVQAAGNNMAQTDSAVGSSWA.

This sequence belongs to the WXG100 family. ESAT-6 subfamily. In terms of assembly, strongly interacts with EsxK to form a heterodimeric complex under reducing conditions. The complex is regulated by the redox state of EsxL.

The protein localises to the secreted. In terms of biological role, induces apoptosis of host cells. Is immunogenic with highly specific seroreactivity towards TB patients' serum. The polypeptide is ESAT-6-like protein EsxL (Mycobacterium tuberculosis (strain ATCC 25618 / H37Rv)).